The chain runs to 200 residues: NADH-quinone oxidoreductase subunit C 1 (200 aa).

Belongs to the complex I 30 kDa subunit family. NDH-1 is composed of 14 different subunits. Subunits NuoB, C, D, E, F, and G constitute the peripheral sector of the complex.

The protein localises to the cell inner membrane. It catalyses the reaction a quinone + NADH + 5 H(+)(in) = a quinol + NAD(+) + 4 H(+)(out). Its function is as follows. NDH-1 shuttles electrons from NADH, via FMN and iron-sulfur (Fe-S) centers, to quinones in the respiratory chain. The immediate electron acceptor for the enzyme in this species is believed to be ubiquinone. Couples the redox reaction to proton translocation (for every two electrons transferred, four hydrogen ions are translocated across the cytoplasmic membrane), and thus conserves the redox energy in a proton gradient. The sequence is that of NADH-quinone oxidoreductase subunit C 1 from Rhizobium etli (strain CIAT 652).